The primary structure comprises 119 residues: Protein MRP-126 (119 aa).

EF-hand domains are found at residues 23 to 58 (DVFH…LKHV) and 59 to 94 (KNQV…VTVA). Thr37, Glu42, Asp72, Asn74, Asp76, Gln78, and Glu83 together coordinate Ca(2+).

The protein belongs to the S-100 family. In terms of tissue distribution, expressed in v-myb-transformed myelomonocytic cells.

The protein is Protein MRP-126 of Gallus gallus (Chicken).